Consider the following 169-residue polypeptide: Probable GPI-anchored adhesin-like protein PGA22 (169 aa).

The N-terminal stretch at 1–18 is a signal peptide; the sequence is MKYSTLAWLVIASYTVFA. N87, N104, N111, and N118 each carry an N-linked (GlcNAc...) asparagine glycan. Residue G140 is the site of GPI-anchor amidated glycine attachment. Residues 141–169 constitute a propeptide, removed in mature form; the sequence is PALTTTTVAEAFSLAAGASLGYLVALLFL.

The protein resides in the cell membrane. Functionally, putative adhesin which may be involved in cell adhesion and virulence. The polypeptide is Probable GPI-anchored adhesin-like protein PGA22 (PGA22) (Candida albicans (strain SC5314 / ATCC MYA-2876) (Yeast)).